The sequence spans 411 residues: LL-diaminopimelate aminotransferase (411 aa).

Residues Tyr15 and Gly42 each coordinate substrate. Residues Tyr72, 108–109, Tyr132, Asn187, Tyr218, and 246–248 contribute to the pyridoxal 5'-phosphate site; these read SK and SFS. The substrate site is built by Lys109, Tyr132, and Asn187. N6-(pyridoxal phosphate)lysine is present on Lys249. Pyridoxal 5'-phosphate-binding residues include Arg257 and Asn292. The substrate site is built by Asn292 and Arg388.

Belongs to the class-I pyridoxal-phosphate-dependent aminotransferase family. LL-diaminopimelate aminotransferase subfamily. In terms of assembly, homodimer. Pyridoxal 5'-phosphate is required as a cofactor.

The enzyme catalyses (2S,6S)-2,6-diaminopimelate + 2-oxoglutarate = (S)-2,3,4,5-tetrahydrodipicolinate + L-glutamate + H2O + H(+). It functions in the pathway amino-acid biosynthesis; L-lysine biosynthesis via DAP pathway; LL-2,6-diaminopimelate from (S)-tetrahydrodipicolinate (aminotransferase route): step 1/1. Functionally, involved in the synthesis of meso-diaminopimelate (m-DAP or DL-DAP), required for both lysine and peptidoglycan biosynthesis. Catalyzes the direct conversion of tetrahydrodipicolinate to LL-diaminopimelate. The protein is LL-diaminopimelate aminotransferase of Geobacter sp. (strain M21).